The following is a 1819-amino-acid chain: U3 small nucleolar RNA-associated protein 10 (1819 aa).

An HEAT repeat occupies L1779 to Y1817.

The protein belongs to the HEATR1/UTP10 family. Component of the ribosomal small subunit (SSU) processome.

Its subcellular location is the nucleus. The protein resides in the nucleolus. Involved in nucleolar processing of pre-18S ribosomal RNA. Involved in ribosome biosynthesis. The sequence is that of U3 small nucleolar RNA-associated protein 10 from Meyerozyma guilliermondii (strain ATCC 6260 / CBS 566 / DSM 6381 / JCM 1539 / NBRC 10279 / NRRL Y-324) (Yeast).